A 356-amino-acid polypeptide reads, in one-letter code: CX3C chemokine receptor 1 (356 aa).

The Extracellular segment spans residues 1 to 26 (MTTLYSDWATESFEYDESSEACFIGD). Residues 27-47 (IVAFGTIFLSIFYSLVFAFGL) form a helical membrane-spanning segment. Topologically, residues 48 to 68 (VGNLLVVCALTSSRKPKSITD) are cytoplasmic. The chain crosses the membrane as a helical span at residues 69–89 (IYLLNLALSDLLFVATLPFWT). Topologically, residues 90–105 (HYVISEQGFHNAVCKL) are extracellular. A disulfide bond links Cys-103 and Cys-176. Residues 106-126 (TTALFFIGFFGGIFFITVISI) traverse the membrane as a helical segment. At 127–147 (DRYMAIVLAANSINNRTVQHG) the chain is on the cytoplasmic side. Residues 148-168 (VTTSLGVWAAAILVAAPQFMF) form a helical membrane-spanning segment. Over 169–195 (TKQKGNECLGDYPEVLQDIWPVLRNTE) the chain is Extracellular. A helical transmembrane segment spans residues 196-216 (ANFLGFLLPVLIMSYCYFRII). Residues 217–232 (QTLFSCKNHKKAKAIK) lie on the Cytoplasmic side of the membrane. Residues 233 to 253 (LILLVVIVFFLFWTPYNVMIF) form a helical membrane-spanning segment. At 254–277 (LETLKLYGFFPNCDMKRDLRLALS) the chain is on the extracellular side. Residues 278–298 (VTETVAFSHCCLNPLIYAFAG) traverse the membrane as a helical segment. Residues 299-356 (QKFRRYLRHLSRKCQAVLCGRPVHVSFSPSESQRSRQESIVSSNFTHYTSDGDASLLL) lie on the Cytoplasmic side of the membrane. The residue at position 347 (Thr-347) is a Phosphothreonine.

This sequence belongs to the G-protein coupled receptor 1 family. Found in a ternary complex with CX3CL1 and ITGAV:ITGB3 or ITGA4:ITGB1. Post-translationally, this protein is not N-glycosylated which is unusual for G-protein-coupled receptors.

The protein resides in the cell membrane. Functionally, receptor for the C-X3-C chemokine fractalkine (CX3CL1) present on many early leukocyte cells; CX3CR1-CX3CL1 signaling exerts distinct functions in different tissue compartments, such as immune response, inflammation, cell adhesion and chemotaxis. CX3CR1-CX3CL1 signaling mediates cell migratory functions. Responsible for the recruitment of natural killer (NK) cells to inflamed tissues. Acts as a regulator of inflammation process leading to atherogenesis by mediating macrophage and monocyte recruitment to inflamed atherosclerotic plaques, promoting cell survival. Involved in airway inflammation by promoting interleukin 2-producing T helper (Th2) cell survival in inflamed lung. Involved in the migration of circulating monocytes to non-inflamed tissues, where they differentiate into macrophages and dendritic cells. Acts as a negative regulator of angiogenesis, probably by promoting macrophage chemotaxis. Plays a key role in brain microglia by regulating inflammatory response in the central nervous system (CNS) and regulating synapse maturation. Required to restrain the microglial inflammatory response in the CNS and the resulting parenchymal damage in response to pathological stimuli. Involved in brain development by participating in synaptic pruning, a natural process during which brain microglia eliminates extra synapses during postnatal development. Synaptic pruning by microglia is required to promote the maturation of circuit connectivity during brain development. Acts as an important regulator of the gut microbiota by controlling immunity to intestinal bacteria and fungi. Expressed in lamina propria dendritic cells in the small intestine, which form transepithelial dendrites capable of taking up bacteria in order to provide defense against pathogenic bacteria. Required to initiate innate and adaptive immune responses against dissemination of commensal fungi (mycobiota) component of the gut: expressed in mononuclear phagocytes (MNPs) and acts by promoting induction of antifungal IgG antibodies response to confer protection against disseminated C.albicans or C.auris infection. Also acts as a receptor for C-C motif chemokine CCL26, inducing cell chemotaxis. This chain is CX3C chemokine receptor 1, found in Oryctolagus cuniculus (Rabbit).